The primary structure comprises 232 residues: LexA repressor (232 aa).

Residues 36-56 constitute a DNA-binding region (H-T-H motif); it reads IREIGDAAGLQSTSSVAYQLK. Basic and acidic residues predominate over residues 62-86; that stretch reads GFLRRDPNKPRAVDVRHLPETDNRT. The interval 62-107 is disordered; that stretch reads GFLRRDPNKPRAVDVRHLPETDNRTKAGPKAKARPTAGASPQPELA. Residues Ser156 and Lys193 each act as for autocatalytic cleavage activity in the active site.

Belongs to the peptidase S24 family. Homodimer.

It catalyses the reaction Hydrolysis of Ala-|-Gly bond in repressor LexA.. Represses a number of genes involved in the response to DNA damage (SOS response), including recA and lexA. In the presence of single-stranded DNA, RecA interacts with LexA causing an autocatalytic cleavage which disrupts the DNA-binding part of LexA, leading to derepression of the SOS regulon and eventually DNA repair. The protein is LexA repressor of Corynebacterium efficiens (strain DSM 44549 / YS-314 / AJ 12310 / JCM 11189 / NBRC 100395).